The chain runs to 100 residues: Pregnancy-associated protein bPAP (100 aa).

The tract at residues 1–40 (DSELAGPRGARGPHGLSGPHGLSGLXGPXGYTGPIGMXGL) is disordered. The segment covering 13-29 (PHGLSGPHGLSGLXGPX) has biased composition (low complexity).

Detected at high levels in the urine of pregnant females (at protein level) and at far lower levels in the urine of nonpregnant females.

This is Pregnancy-associated protein bPAP from Bos taurus (Bovine).